Reading from the N-terminus, the 341-residue chain is Phosphoribosylformylglycinamidine cyclo-ligase (341 aa).

This sequence belongs to the AIR synthase family.

It localises to the cytoplasm. The enzyme catalyses 2-formamido-N(1)-(5-O-phospho-beta-D-ribosyl)acetamidine + ATP = 5-amino-1-(5-phospho-beta-D-ribosyl)imidazole + ADP + phosphate + H(+). It participates in purine metabolism; IMP biosynthesis via de novo pathway; 5-amino-1-(5-phospho-D-ribosyl)imidazole from N(2)-formyl-N(1)-(5-phospho-D-ribosyl)glycinamide: step 2/2. The chain is Phosphoribosylformylglycinamidine cyclo-ligase from Xanthomonas axonopodis pv. citri (strain 306).